We begin with the raw amino-acid sequence, 1082 residues long: DNA-directed RNA polymerase subunit beta (1082 aa).

Belongs to the RNA polymerase beta chain family. In terms of assembly, in plastids the minimal PEP RNA polymerase catalytic core is composed of four subunits: alpha, beta, beta', and beta''. When a (nuclear-encoded) sigma factor is associated with the core the holoenzyme is formed, which can initiate transcription.

The protein localises to the plastid. The protein resides in the chloroplast. It catalyses the reaction RNA(n) + a ribonucleoside 5'-triphosphate = RNA(n+1) + diphosphate. Functionally, DNA-dependent RNA polymerase catalyzes the transcription of DNA into RNA using the four ribonucleoside triphosphates as substrates. The protein is DNA-directed RNA polymerase subunit beta of Euglena gracilis.